Consider the following 468-residue polypeptide: 3-isopropylmalate dehydratase large subunit (468 aa).

3 residues coordinate [4Fe-4S] cluster: Cys-349, Cys-409, and Cys-412.

The protein belongs to the aconitase/IPM isomerase family. LeuC type 1 subfamily. In terms of assembly, heterodimer of LeuC and LeuD. It depends on [4Fe-4S] cluster as a cofactor.

It carries out the reaction (2R,3S)-3-isopropylmalate = (2S)-2-isopropylmalate. The protein operates within amino-acid biosynthesis; L-leucine biosynthesis; L-leucine from 3-methyl-2-oxobutanoate: step 2/4. In terms of biological role, catalyzes the isomerization between 2-isopropylmalate and 3-isopropylmalate, via the formation of 2-isopropylmaleate. This is 3-isopropylmalate dehydratase large subunit from Roseobacter denitrificans (strain ATCC 33942 / OCh 114) (Erythrobacter sp. (strain OCh 114)).